A 395-amino-acid polypeptide reads, in one-letter code: MAKEKFDRSKPHVNIGTIGHIDHGKTTLTAAITKVLAKHNPKNKFRSFDSIDNAPEEKARGITIAVAHVEYETAKRHYAHVDCPGHADYIKNMITGAAQMDGAIVVVAATDGPMPQTREHILLARQVGVPYIVVAMNKVDMVDDSELLDLVELEVRELLKSYQFPGDDLPVVRVSALGALNGEPQWEKTVDELMEAVDSYIPMPERAIDKPFIMPIEDIFSIQGRGTVVTGRIERGICKVGEEMEIVGFRDTRKTVVTGVEMFKKLLDEGRAGDNVGLLLRGVEKDMVERGQVIAKPGSITPHTKFKGEVYVLSKEEGGRHTPFFKGYRPQFYFRTTDVTGVAQLPEGTEMVMPGDNVSLEVELITPVAMDKGLRFAIREGGRTVGAGTVTEILK.

Residues 10-205 enclose the tr-type G domain; that stretch reads KPHVNIGTIG…AVDSYIPMPE (196 aa). The tract at residues 19–26 is G1; it reads GHIDHGKT. 19-26 is a GTP binding site; that stretch reads GHIDHGKT. A Mg(2+)-binding site is contributed by T26. Residues 61–65 are G2; it reads GITIA. A G3 region spans residues 82-85; the sequence is DCPG. GTP contacts are provided by residues 82–86 and 137–140; these read DCPGH and NKVD. Residues 137–140 are G4; it reads NKVD. Residues 175–177 are G5; that stretch reads SAL.

The protein belongs to the TRAFAC class translation factor GTPase superfamily. Classic translation factor GTPase family. EF-Tu/EF-1A subfamily. Monomer.

It is found in the cytoplasm. The catalysed reaction is GTP + H2O = GDP + phosphate + H(+). GTP hydrolase that promotes the GTP-dependent binding of aminoacyl-tRNA to the A-site of ribosomes during protein biosynthesis. This is Elongation factor Tu from Solibacter usitatus (strain Ellin6076).